The chain runs to 207 residues: MSVTIDHTTENAAPAQAPVSDRAWALFRALDGKGLVPDGYVEGWKKTFEEDFSPRRGAELVARAWTDPEFRQLLLTDGTAAVAQYGYLGPQGEYIVAVEDTPTLKNVIVCSLCSCTAWPILGLPPTWYKSFEYRARVVREPRKVLSEMGTEIASDIEIRVYDTTAETRYMVLPQRPAGTEGWSQEQLQEIVTKDCLIGVAIPQVPTV.

Cys110, Cys113, Ser114, and Cys115 together coordinate Fe(3+). Cys113 is modified (cysteine sulfinic acid (-SO2H)). Cys115 bears the Cysteine sulfenic acid (-SOH) mark.

This sequence belongs to the nitrile hydratase subunit alpha family. In terms of assembly, heterodimer of an alpha and a beta chain. Requires Fe(3+) as cofactor. Post-translationally, oxidation on Cys-113 is essential for the activity. Oxidation on Cys-115 stabilizes the Fe-NO ligand coordinated in the inactive form.

The catalysed reaction is an aliphatic primary amide = an aliphatic nitrile + H2O. Inactivated by nitrosylation of the iron center in the dark and activated by photo-induced nitric oxide (NO) release. Inactivated by oxidation of Cys-115 to a sulfenic acid. NHase catalyzes the hydration of various nitrile compounds to the corresponding amides. Industrial production of acrylamide is now being developed using some of the enzymes of this class. This chain is Nitrile hydratase subunit alpha (nthA), found in Rhodococcus erythropolis (Arthrobacter picolinophilus).